A 535-amino-acid polypeptide reads, in one-letter code: Portal protein (535 aa).

The protein belongs to the podoviridae portal protein family. Homododecamer. Interacts with major capsid protein. Interacts with the tail tube proteins gp11 and gp12. Interacts with the terminase large subunit. Interacts with the internal virion protein gp14.

The protein localises to the virion. Functionally, forms the portal vertex of the capsid. This portal plays critical roles in head assembly, genome packaging, neck/tail attachment, and genome ejection. The portal protein multimerizes as a single ring-shaped homododecamer arranged around a central channel. In Enterobacteria phage T3 (Bacteriophage T3), this protein is Portal protein (8).